Consider the following 93-residue polypeptide: Sm-like protein LSM2 (93 aa).

Residues Leu2–Gly76 form the Sm domain.

The protein belongs to the snRNP Sm proteins family. In terms of assembly, component of the heptameric LSM1-LSM7 complex that forms a seven-membered ring structure with a donut shape. The LSM subunits are arranged in the order LSM1, LSM2, LSM3, LSM6, LSM5, LSM7 and LSM4. LSM2 subunit interacts only with its two neighboring subunits, LSM1A or LSM1B and LSM3A or LSM3B. Component of the heptameric LSM2-LSM8 complex that forms a seven-membered ring structure with a donut shape. The LSM subunits are arranged in the order LSM8, LSM2, LSM3, LSM6, LSM5, LSM7 and LSM4. LSM2 subunit interacts only with its two neighboring subunits, LSM8 and LSM3A or LSM3B. In terms of tissue distribution, expressed in roots, leaves, stems, flowers and siliques.

It is found in the cytoplasm. It localises to the nucleus. Component of LSM protein complexes, which are involved in RNA processing. Component of the cytoplasmic LSM1-LSM7 complex which is involved in mRNA degradation by promoting decapping and leading to accurate 5'-3' mRNA decay. The cytoplasmic LSM1-LSM7 complex regulates developmental gene expression by the decapping of specific development-related transcripts. Component of the nuclear LSM2-LSM8 complex which is involved splicing nuclear mRNAs. LSM2-LSM8 binds directly to the U6 small nuclear RNAs (snRNAs) and is essential for accurate splicing of selected development-related mRNAs through the stabilization of the spliceosomal U6 snRNA. Plays a critical role in the regulation of development-related gene expression. This is Sm-like protein LSM2 from Arabidopsis thaliana (Mouse-ear cress).